The sequence spans 314 residues: 3'-5' exoribonuclease YhaM (314 aa).

One can recognise an HD domain in the interval 163–279 (HVVSMLDLAK…LHYIDNLDAK (117 aa)).

The protein belongs to the YhaM family.

Functionally, shows a 3'-5' exoribonuclease activity. The protein is 3'-5' exoribonuclease YhaM of Bacillus thuringiensis (strain Al Hakam).